Reading from the N-terminus, the 364-residue chain is Alanine racemase (364 aa).

The Proton acceptor; specific for D-alanine role is filled by Lys-35. Lys-35 is modified (N6-(pyridoxal phosphate)lysine). Arg-130 contributes to the substrate binding site. Tyr-256 acts as the Proton acceptor; specific for L-alanine in catalysis. A substrate-binding site is contributed by Met-304.

Belongs to the alanine racemase family. Requires pyridoxal 5'-phosphate as cofactor.

It carries out the reaction L-alanine = D-alanine. It functions in the pathway amino-acid biosynthesis; D-alanine biosynthesis; D-alanine from L-alanine: step 1/1. Its function is as follows. Catalyzes the interconversion of L-alanine and D-alanine. May also act on other amino acids. This chain is Alanine racemase (alr), found in Polaromonas sp. (strain JS666 / ATCC BAA-500).